We begin with the raw amino-acid sequence, 201 residues long: FMN-dependent NADH:quinone oxidoreductase (201 aa).

FMN contacts are provided by residues serine 9 and 93–96 (MYNF).

This sequence belongs to the azoreductase type 1 family. Homodimer. It depends on FMN as a cofactor.

The enzyme catalyses 2 a quinone + NADH + H(+) = 2 a 1,4-benzosemiquinone + NAD(+). It carries out the reaction N,N-dimethyl-1,4-phenylenediamine + anthranilate + 2 NAD(+) = 2-(4-dimethylaminophenyl)diazenylbenzoate + 2 NADH + 2 H(+). In terms of biological role, quinone reductase that provides resistance to thiol-specific stress caused by electrophilic quinones. Also exhibits azoreductase activity. Catalyzes the reductive cleavage of the azo bond in aromatic azo compounds to the corresponding amines. The protein is FMN-dependent NADH:quinone oxidoreductase of Bradyrhizobium sp. (strain BTAi1 / ATCC BAA-1182).